The sequence spans 254 residues: Ribosomal RNA small subunit methyltransferase G (254 aa).

S-adenosyl-L-methionine is bound by residues Gly-84, Phe-89, 136–137 (VE), and Arg-155. Residues 231-254 (HLYPRAVGIPSKQPLGIQADDNRS) form a disordered region.

This sequence belongs to the methyltransferase superfamily. RNA methyltransferase RsmG family.

The protein resides in the cytoplasm. Specifically methylates the N7 position of a guanine in 16S rRNA. The polypeptide is Ribosomal RNA small subunit methyltransferase G (Synechococcus sp. (strain WH7803)).